Consider the following 48-residue polypeptide: Small polypeptide DEVIL 14 (48 aa).

The chain crosses the membrane as a helical span at residues 4-23 (TVVLRCCTSVTKVRTWKRCS). The segment at 17–48 (RTWKRCSKQIKEQRARLYIIWKCAVFLLSSHD) is required for DVL/RTFL small polypeptide activity.

The protein belongs to the DVL/RTFL small polypeptides family.

It localises to the cell membrane. In terms of biological role, small polypeptide acting as a regulatory molecule which coordinates cellular responses required for differentiation, growth and development, probably by restricting polar cell proliferation in lateral organs and coordinating socket cell recruitment and differentiation at trichome sites. In Arabidopsis thaliana (Mouse-ear cress), this protein is Small polypeptide DEVIL 14.